The sequence spans 734 residues: MSWESGAGPGLGSQGMDLVWSAWYGKCVKGKGSLPLSAHGIVVAWLSRAEWDQVTVYLFCDDHKLQRYALNRITVWRSRSGNELPLAVASTADLIRCKLLDVTGGLGTDELRLLYGMALVRFVNLISERKTKFAKVPLKCLAQEVNIPDWIVDLRHELTHKKMPHINDCRRGCYFVLDWLQKTYWCRQLENSLRETWELEEFREGIEEEDQEEDKNIVVDDITEQKPEPQDDGKSTESDVKADGDSKGSEEVDSHCKKALSHKELYERARELLVSYEEEQFTVLEKFRYLPKAIKAWNNPSPRVECVLAELKGVTCENREAVLDAFLDDGFLVPTFEQLAALQIEYEDGQTEVQRGEGTDPKSHKNVDLNDVLVPKPFSQFWQPLLRGLHSQNFTQALLERMLSELPALGISGIRPTYILRWTVELIVANTKTGRNARRFSAGQWEARRGWRLFNCSASLDWPRMVESCLGSPCWASPQLLRIIFKAMGQGLPDEEQEKLLRICSIYTQSGENSLVQEGSEASPIGKSPYTLDSLYWSVKPASSSFGSEAKAQQQEEQGSVNDVKEEEKEEKEVLPDQVEEEEENDDQEEEEEDEDDEDDEEEDRMEVGPFSTGQESPTAENARLLAQKRGALQGSAWQVSSEDVRWDTFPLGRMPGQTEDPAELMLENYDTMYLLDQPVLEQRLEPSTCKTDTLGLSCGVGSGNCSNSSSSNFEGLLWSQGQLHGLKTGLQLF.

Residues 204-255 (EGIEEEDQEEDKNIVVDDITEQKPEPQDDGKSTESDVKADGDSKGSEEVDSH) form a disordered region. Residues 214-255 (DKNIVVDDITEQKPEPQDDGKSTESDVKADGDSKGSEEVDSH) show a composition bias toward basic and acidic residues. Glycyl lysine isopeptide (Lys-Gly) (interchain with G-Cter in SUMO2) cross-links involve residues Lys-215 and Lys-226. Phosphoserine occurs at positions 441, 523, and 560. Polar residues predominate over residues 547 to 561 (GSEAKAQQQEEQGSV). The interval 547-619 (GSEAKAQQQE…PFSTGQESPT (73 aa)) is disordered. A compositionally biased stretch (basic and acidic residues) spans 563 to 575 (DVKEEEKEEKEVL). The span at 578-605 (QVEEEEENDDQEEEEEDEDDEDDEEEDR) shows a compositional bias: acidic residues. Ser-617 carries the post-translational modification Phosphoserine. The interval 636-655 (SAWQVSSEDVRWDTFPLGRM) is interaction with NOL9.

It belongs to the LAS1 family. As to quaternary structure, component of some MLL1/MLL complex, at least composed of the core components KMT2A/MLL1, ASH2L, HCFC1/HCF1, WDR5 and RBBP5, as well as the facultative components BACC1, CHD8, E2F6, HSP70, INO80C, KANSL1, LAS1L, MAX, MCRS1, MGA, KAT8/MOF, PELP1, PHF20, PRP31, RING2, RUVB1/TIP49A, RUVB2/TIP49B, SENP3, TAF1, TAF4, TAF6, TAF7, TAF9 and TEX10. Component of the 5FMC complex, at least composed of PELP1, LAS1L, TEX10, WDR18 and SENP3; the complex interacts with methylated CHTOP and ZNF148. Interacts with NOL9 to form an ITS2 pre-rRNA endonuclease-kinase complex.

It localises to the nucleus. The protein resides in the nucleolus. The protein localises to the nucleoplasm. Its subcellular location is the cytoplasm. Required for the synthesis of the 60S ribosomal subunit and maturation of the 28S rRNA. Functions as a component of the Five Friends of Methylated CHTOP (5FMC) complex; the 5FMC complex is recruited to ZNF148 by methylated CHTOP, leading to desumoylation of ZNF148 and subsequent transactivation of ZNF148 target genes. Required for the efficient pre-rRNA processing at both ends of internal transcribed spacer 2 (ITS2). In Homo sapiens (Human), this protein is Ribosomal biogenesis protein LAS1L (LAS1L).